A 160-amino-acid chain; its full sequence is 2-C-methyl-D-erythritol 2,4-cyclodiphosphate synthase (160 aa).

A divalent metal cation contacts are provided by aspartate 11 and histidine 13. 4-CDP-2-C-methyl-D-erythritol 2-phosphate-binding positions include 11–13 (DVH) and 37–38 (HS). Histidine 45 provides a ligand contact to a divalent metal cation. 4-CDP-2-C-methyl-D-erythritol 2-phosphate is bound by residues 59 to 61 (DIG) and arginine 145.

This sequence belongs to the IspF family. Homotrimer. It depends on a divalent metal cation as a cofactor.

The enzyme catalyses 4-CDP-2-C-methyl-D-erythritol 2-phosphate = 2-C-methyl-D-erythritol 2,4-cyclic diphosphate + CMP. It participates in isoprenoid biosynthesis; isopentenyl diphosphate biosynthesis via DXP pathway; isopentenyl diphosphate from 1-deoxy-D-xylulose 5-phosphate: step 4/6. Involved in the biosynthesis of isopentenyl diphosphate (IPP) and dimethylallyl diphosphate (DMAPP), two major building blocks of isoprenoid compounds. Catalyzes the conversion of 4-diphosphocytidyl-2-C-methyl-D-erythritol 2-phosphate (CDP-ME2P) to 2-C-methyl-D-erythritol 2,4-cyclodiphosphate (ME-CPP) with a corresponding release of cytidine 5-monophosphate (CMP). The protein is 2-C-methyl-D-erythritol 2,4-cyclodiphosphate synthase of Neisseria meningitidis serogroup A / serotype 4A (strain DSM 15465 / Z2491).